A 242-amino-acid polypeptide reads, in one-letter code: Small ribosomal subunit protein uS2 (242 aa).

It belongs to the universal ribosomal protein uS2 family.

This Neisseria meningitidis serogroup C (strain 053442) protein is Small ribosomal subunit protein uS2.